We begin with the raw amino-acid sequence, 359 residues long: Molybdenum import ATP-binding protein ModC (359 aa).

The ABC transporter domain maps to 1-233 (MSGLTVSIRG…IDAESEGGGV (233 aa)). 32–39 (GHSGAGKT) is an ATP binding site. The Mop domain maps to 289–355 (AISIRNLLPV…VKAVSVDRAA (67 aa)).

It belongs to the ABC transporter superfamily. Molybdate importer (TC 3.A.1.8) family. As to quaternary structure, the complex is composed of two ATP-binding proteins (ModC), two transmembrane proteins (ModB) and a solute-binding protein (ModA).

It localises to the cell inner membrane. The enzyme catalyses molybdate(out) + ATP + H2O = molybdate(in) + ADP + phosphate + H(+). Part of the ABC transporter complex ModABC involved in molybdenum import. Responsible for energy coupling to the transport system. This Brucella melitensis biotype 1 (strain ATCC 23456 / CCUG 17765 / NCTC 10094 / 16M) protein is Molybdenum import ATP-binding protein ModC.